Here is a 116-residue protein sequence, read N- to C-terminus: Large ribosomal subunit protein bL19 (116 aa).

Belongs to the bacterial ribosomal protein bL19 family.

In terms of biological role, this protein is located at the 30S-50S ribosomal subunit interface and may play a role in the structure and function of the aminoacyl-tRNA binding site. The sequence is that of Large ribosomal subunit protein bL19 from Flavobacterium psychrophilum (strain ATCC 49511 / DSM 21280 / CIP 103535 / JIP02/86).